Reading from the N-terminus, the 180-residue chain is MHGENEVVVLRLGHRPGRDNRMTTHVGLTARALGADRVSIAGAASDSKATIEDITDRFGGPFEVELTTEPRALVRDWAGTVVHLTMYGQRIQDVEADIREAHASGPVLIVVGAEKVPFDVYEQADYNVGVTNQPHSEVAGLAVFLDRLFEGRQLDREWENADRRVVPKETGKRVEPVDEE.

S-adenosyl-L-methionine-binding positions include L84 and 112 to 116; that span reads GAEKV.

The protein belongs to the aTrm56 family. Homodimer.

The protein resides in the cytoplasm. It carries out the reaction cytidine(56) in tRNA + S-adenosyl-L-methionine = 2'-O-methylcytidine(56) in tRNA + S-adenosyl-L-homocysteine + H(+). Its function is as follows. Specifically catalyzes the AdoMet-dependent 2'-O-ribose methylation of cytidine at position 56 in tRNAs. This is tRNA (cytidine(56)-2'-O)-methyltransferase from Natronomonas pharaonis (strain ATCC 35678 / DSM 2160 / CIP 103997 / JCM 8858 / NBRC 14720 / NCIMB 2260 / Gabara) (Halobacterium pharaonis).